The primary structure comprises 305 residues: Cbb3-type cytochrome c oxidase subunit CcoP2 (305 aa).

Helical transmembrane passes span 4 to 24 and 57 to 77; these read FWSWYVTLLSLGTIAALVWLL and WWFMLFVGTVIFALGYLVLYP. Cytochrome c domains lie at 130–209 and 219–300; these read QALK…RSLS and VDIE…YSLS. Heme c is bound by residues Cys143, Cys146, His147, Met186, Cys232, Cys235, His236, and Met277.

As to quaternary structure, component of the cbb3-type cytochrome c oxidase at least composed of CcoN, CcoO, CcoQ and CcoP. It depends on heme c as a cofactor.

The protein localises to the cell inner membrane. Its pathway is energy metabolism; oxidative phosphorylation. C-type cytochrome. Part of the cbb3-type cytochrome c oxidase complex. CcoP subunit is required for transferring electrons from donor cytochrome c via its heme groups to CcoO subunit. From there, electrons are shuttled to the catalytic binuclear center of CcoN subunit where oxygen reduction takes place. The complex also functions as a proton pump. The polypeptide is Cbb3-type cytochrome c oxidase subunit CcoP2 (Stutzerimonas stutzeri (Pseudomonas stutzeri)).